A 77-amino-acid polypeptide reads, in one-letter code: Omega-conotoxin-like 6 (77 aa).

An N-terminal signal peptide occupies residues 1–22; the sequence is MKLTCVVIIAVLLLTACQLITA. Positions 23–50 are excised as a propeptide; that stretch reads DDSRGVQKHRSLRSTTKVSKSTSCMEAG. Cystine bridges form between Cys-46–Cys-61, Cys-53–Cys-64, and Cys-60–Cys-71.

It belongs to the conotoxin O1 superfamily. In terms of tissue distribution, expressed by the venom duct.

It localises to the secreted. Functionally, omega-conotoxins act at presynaptic membranes, they bind and block voltage-gated calcium channels (Cav). The protein is Omega-conotoxin-like 6 of Conus striatus (Striated cone).